The chain runs to 82 residues: Exodeoxyribonuclease 7 small subunit (82 aa).

This sequence belongs to the XseB family. In terms of assembly, heterooligomer composed of large and small subunits.

The protein localises to the cytoplasm. The catalysed reaction is Exonucleolytic cleavage in either 5'- to 3'- or 3'- to 5'-direction to yield nucleoside 5'-phosphates.. Functionally, bidirectionally degrades single-stranded DNA into large acid-insoluble oligonucleotides, which are then degraded further into small acid-soluble oligonucleotides. This is Exodeoxyribonuclease 7 small subunit from Mycobacterium avium (strain 104).